Reading from the N-terminus, the 729-residue chain is Sodium-dependent neutral amino acid transporter B(0)AT2 (729 aa).

Residues 1–69 lie on the Cytoplasmic side of the membrane; sequence MPKNSKVVKR…ERPAWNSKLQ (69 aa). Residues serine 25 and serine 55 each carry the phosphoserine modification. The disordered stretch occupies residues 42-61; that stretch reads DVQEEKDTDAEDGSEADDER. Positions 43–59 are enriched in acidic residues; the sequence is VQEEKDTDAEDGSEADD. A run of 3 helical transmembrane segments spans residues 70 to 90, 98 to 117, and 142 to 162; these read YILAQVGFSVGLGNVWRFPYL, AYLLPYLILLLVIGIPLFFL, and GIGFASCVVCYFVALYYNVII. The Extracellular portion of the chain corresponds to 163–225; sequence GWTLFYFSQS…SSISDSGGLN (63 aa). Asparagine 187 carries an N-linked (GlcNAc...) asparagine glycan. 2 consecutive transmembrane segments (helical) span residues 226–244 and 253–270; these read WKMTVCLLVAWVMVCLAMI and IMYFSSLFPYVVLICFLI. An N-linked (GlcNAc...) asparagine glycan is attached at asparagine 276. 2 helical membrane passes run 306–323 and 335–356; these read VFFALGLGFGGVIAFSSY and VLVSFINFFTSVLATLVVFAVL. Residues 357–452 lie on the Extracellular side of the membrane; sequence GFKANIVNEK…FIAFTEAMTH (96 aa). 2 N-linked (GlcNAc...) asparagine glycosylation sites follow: asparagine 383 and asparagine 394. 5 helical membrane passes run 453–472, 496–514, 530–550, 571–592, and 620–642; these read FPASPFWSVMFFLMLINLGL, ILTVICCLLAFCIGLIFVQ, TLPLLIVVILENIAVSFVYGI, YMWKYISPLMLLTLLIASIVNM, and VVCFSLMVLAILPVPVVFIIRRC. Topologically, residues 643-729 are cytoplasmic; sequence NLIDDSSGNL…DMPDMPESDL (87 aa). A phosphoserine mark is found at serine 687, serine 699, and serine 701.

Belongs to the sodium:neurotransmitter symporter (SNF) (TC 2.A.22) family. SLC6A15 subfamily. As to expression, significant expressed in brain, lung and kidney. In brain, mainly expressed int the cortex, the cerebellum and the brain stem.

The protein resides in the membrane. It catalyses the reaction L-pipecolate(in) + Na(+)(in) = L-pipecolate(out) + Na(+)(out). The catalysed reaction is L-leucine(in) + Na(+)(in) = L-leucine(out) + Na(+)(out). It carries out the reaction L-isoleucine(in) + Na(+)(in) = L-isoleucine(out) + Na(+)(out). The enzyme catalyses L-methionine(in) + Na(+)(in) = L-methionine(out) + Na(+)(out). It catalyses the reaction L-proline(in) + Na(+)(in) = L-proline(out) + Na(+)(out). The catalysed reaction is L-alanine(in) + Na(+)(in) = L-alanine(out) + Na(+)(out). It carries out the reaction L-asparagine(in) + Na(+)(in) = L-asparagine(out) + Na(+)(out). The enzyme catalyses L-valine(in) + Na(+)(in) = L-valine(out) + Na(+)(out). It catalyses the reaction L-cysteine(in) + Na(+)(in) = L-cysteine(out) + Na(+)(out). The catalysed reaction is L-glutamine(in) + Na(+)(in) = L-glutamine(out) + Na(+)(out). It carries out the reaction L-serine(in) + Na(+)(in) = L-serine(out) + Na(+)(out). The enzyme catalyses L-threonine(in) + Na(+)(in) = L-threonine(out) + Na(+)(out). It catalyses the reaction L-phenylalanine(in) + Na(+)(in) = L-phenylalanine(out) + Na(+)(out). Its function is as follows. Functions as a sodium-dependent neutral amino acid transporter. Exhibits preference for methionine and for the branched-chain amino acids, particularly leucine, valine and isoleucine. Can also transport low-affinity substrates such as alanine, phenylalanine, glutamine and pipecolic acid. Mediates the saturable, pH-sensitive and electrogenic cotransport of proline and sodium ions with a stoichiometry of 1:1. May have a role as transporter for neurotransmitter precursors into neurons. In contrast to other members of the neurotransmitter transporter family, does not appear to be chloride-dependent. This is Sodium-dependent neutral amino acid transporter B(0)AT2 (Slc6a15) from Mus musculus (Mouse).